Reading from the N-terminus, the 280-residue chain is Succinate dehydrogenase [ubiquinone] iron-sulfur subunit, mitochondrial (280 aa).

The transit peptide at methionine 1–glycine 28 directs the protein to the mitochondrion. In terms of domain architecture, 2Fe-2S ferredoxin-type spans lysine 40–proline 131. Residues lysine 51 and lysine 55 each carry the N6-acetyllysine modification. [2Fe-2S] cluster-binding residues include cysteine 93, cysteine 98, cysteine 101, and cysteine 113. The interaction with SDHAF1 stretch occupies residues phenylalanine 146–tryptophan 218. The 4Fe-4S ferredoxin-type domain occupies glutamate 176 to tyrosine 206. [4Fe-4S] cluster is bound by residues cysteine 186, cysteine 189, and cysteine 192. A [3Fe-4S] cluster-binding site is contributed by cysteine 196. Tryptophan 201 contributes to the a ubiquinone binding site. The [3Fe-4S] cluster site is built by cysteine 243 and cysteine 249. Residue cysteine 253 participates in [4Fe-4S] cluster binding.

The protein belongs to the succinate dehydrogenase/fumarate reductase iron-sulfur protein family. As to quaternary structure, component of complex II composed of four subunits: the flavoprotein (FP) SDHA, iron-sulfur protein (IP) SDHB, and a cytochrome b560 composed of SDHC and SDHD. Interacts with SDHAF1; the interaction is required for iron-sulfur cluster incorporation into SDHB. [2Fe-2S] cluster is required as a cofactor. The cofactor is [3Fe-4S] cluster. Requires [4Fe-4S] cluster as cofactor.

The protein resides in the mitochondrion inner membrane. The catalysed reaction is a quinone + succinate = fumarate + a quinol. It carries out the reaction (R)-malate + a quinone = enol-oxaloacetate + a quinol. The enzyme catalyses (S)-malate + a quinone = enol-oxaloacetate + a quinol. Its pathway is carbohydrate metabolism; tricarboxylic acid cycle; fumarate from succinate (eukaryal route): step 1/1. Its activity is regulated as follows. Enol-oxaloacetate inhibits the succinate dehydrogenase activity. Iron-sulfur protein (IP) subunit of the succinate dehydrogenase complex (mitochondrial respiratory chain complex II), responsible for transferring electrons from succinate to ubiquinone (coenzyme Q). SDH also oxidizes malate to the non-canonical enol form of oxaloacetate, enol-oxaloacetate. Enol-oxaloacetate, which is a potent inhibitor of the succinate dehydrogenase activity, is further isomerized into keto-oxaloacetate. This is Succinate dehydrogenase [ubiquinone] iron-sulfur subunit, mitochondrial (SDHB) from Sus scrofa (Pig).